We begin with the raw amino-acid sequence, 607 residues long: Monocarboxylate transporter 7 (607 aa).

Residues 1 to 84 (MRASGQGPQR…PAETGCSRSR (84 aa)) are disordered. Topologically, residues 1–105 (MRASGQGPQR…ANVYTQVPDG (105 aa)) are cytoplasmic. Residues 106–126 (GWGWAVAVSFFFVEVFTYGII) form a helical membrane-spanning segment. Residues 127–146 (KSFGVFFNDLMDSFDESNSK) lie on the Extracellular side of the membrane. A helical transmembrane segment spans residues 147-167 (ISWIISICVFVLTFTAPLSTV). At 168–175 (LSNRFGHR) the chain is on the cytoplasmic side. Residues 176–196 (LVVMAGGLLISLGMITASFSQ) traverse the membrane as a helical segment. Topologically, residues 197 to 202 (RVYHMY) are extracellular. The chain crosses the membrane as a helical span at residues 203–223 (ISIGVISGLGYCFSFLPTVTI). The Cytoplasmic portion of the chain corresponds to 224 to 233 (LSQYFDKRRS). The chain crosses the membrane as a helical span at residues 234-254 (VVTAVASTGECFAVFAFAPAI). The Extracellular portion of the chain corresponds to 255 to 268 (TALKEHIGWRYSLL). Residues 269 to 289 (FVGLLQLNIMVCGALLRPIII) form a helical membrane-spanning segment. Residues 290–383 (QGPGQSPKAV…KEKSFICYAL (94 aa)) are Cytoplasmic-facing. 4 positions are modified to phosphoserine: serine 319, serine 322, serine 325, and serine 332. The chain crosses the membrane as a helical span at residues 384-404 (FGLFATLGFFAPSLYIIPLGI). The Extracellular portion of the chain corresponds to 405-414 (SLGIDPDRAA). The chain crosses the membrane as a helical span at residues 415 to 435 (FLLSTMAIAEVFGRIGAGFVL). The Cytoplasmic segment spans residues 436 to 442 (NREPIRK). A helical membrane pass occupies residues 443 to 463 (IYIELICVILLTASLFAFTFA). The Extracellular portion of the chain corresponds to 464–465 (TE). Residues 466-486 (FWGLMLCSVFFGSMVGTIGGT) form a helical membrane-spanning segment. Residues 487-507 (HIPMLAEDDVVGIEKMSSAAG) are Cytoplasmic-facing. The helical transmembrane segment at 508–528 (VYVFIQSISGLAGPPLAGLLV) threads the bilayer. Over 529–536 (DQSKIYSR) the chain is Extracellular. Residues 537-557 (AFYSCAAGMCLAAVCLALVRP) traverse the membrane as a helical segment. The Cytoplasmic segment spans residues 558–607 (CKKGLCQNSHSGENQTDRQRGKALQDIPEDFLEMDLGKCEHRAHMKMDPV).

It belongs to the major facilitator superfamily. Monocarboxylate porter (TC 2.A.1.13) family. In terms of assembly, forms functional complexes with BSG/CD147 or EMB/GP70 ancillary proteins.

It is found in the basolateral cell membrane. It catalyses the reaction taurine(out) = taurine(in). Monocarboxylate transporter selective for taurine. May associate with BSG/CD147 or EMB/GP70 ancillary proteins to mediate facilitative efflux or influx of taurine across the plasma membrane. The transport is pH- and sodium-independent. Rather low-affinity, is likely effective for taurine transport in tissues where taurine is present at high concentrations. In Mus musculus (Mouse), this protein is Monocarboxylate transporter 7.